Reading from the N-terminus, the 503-residue chain is Cytochrome c-552 (503 aa).

Residues 1–16 form the signal peptide; sequence MKKNTIILVGALIAIA. Residue H102 participates in heme c binding. Heme-binding residues include C130, C133, and K134. Positions 168, 171, 172, 210, 213, and 214 each coordinate heme c. 4 residues coordinate Ca(2+): E216, Y217, K273, and Q275. Y217 contributes to the substrate binding site. H276 is a substrate binding site. 9 residues coordinate heme c: H287, C294, C297, H298, H312, C325, C328, H329, and H404.

Belongs to the cytochrome c-552 family. Ca(2+) serves as cofactor. The cofactor is heme c.

It is found in the periplasm. It carries out the reaction 6 Fe(III)-[cytochrome c] + NH4(+) + 2 H2O = 6 Fe(II)-[cytochrome c] + nitrite + 8 H(+). It participates in nitrogen metabolism; nitrate reduction (assimilation). In terms of biological role, catalyzes the reduction of nitrite to ammonia, consuming six electrons in the process. The chain is Cytochrome c-552 from Maridesulfovibrio salexigens (strain ATCC 14822 / DSM 2638 / NCIMB 8403 / VKM B-1763) (Desulfovibrio salexigens).